We begin with the raw amino-acid sequence, 349 residues long: N-acetyl-gamma-glutamyl-phosphate reductase (349 aa).

Cys-149 is an active-site residue.

Belongs to the NAGSA dehydrogenase family. Type 1 subfamily.

The protein localises to the cytoplasm. It catalyses the reaction N-acetyl-L-glutamate 5-semialdehyde + phosphate + NADP(+) = N-acetyl-L-glutamyl 5-phosphate + NADPH + H(+). Its pathway is amino-acid biosynthesis; L-arginine biosynthesis; N(2)-acetyl-L-ornithine from L-glutamate: step 3/4. Its function is as follows. Catalyzes the NADPH-dependent reduction of N-acetyl-5-glutamyl phosphate to yield N-acetyl-L-glutamate 5-semialdehyde. This Acinetobacter baumannii (strain AB307-0294) protein is N-acetyl-gamma-glutamyl-phosphate reductase.